Consider the following 218-residue polypeptide: Guanylate kinase (218 aa).

Residues 10-190 (GLLIILSSPS…TEERLKTIIT (181 aa)) form the Guanylate kinase-like domain. Position 17–24 (17–24 (SPSGAGKS)) interacts with ATP.

The protein belongs to the guanylate kinase family.

Its subcellular location is the cytoplasm. The catalysed reaction is GMP + ATP = GDP + ADP. Its function is as follows. Essential for recycling GMP and indirectly, cGMP. This chain is Guanylate kinase, found in Jannaschia sp. (strain CCS1).